The following is a 605-amino-acid chain: MNITKIKERQKRIRNFSIIAHIDHGKSTLADRILEITGTIDKRVMQTQILDSMDLERERGITIKLNAVQILYQAQNKQQYIMHLIDTPGHVDFSYEVSRSLAACEGAILVIDAAQGIQSQTLANVYLAIENNLTIIPVLNKVDLPSADVPRVKGEIKDILNIDPEMAISASGKTGAGVIDILERIVTQISPPKGDPEAPLQALIFDSYFDPYKGVVPSIRIINGTVKKGDQILFMAGKHVYEVVEVGVYNPKQISKDYLAPGDVGYLTAAIKSINHVSVGDTITSNHKPAIQPLPGYKKMNSVVFCGLYPIEINKYEALKEALEKLKLSDSSLVFEPESSSALGLGFRTGFLGLLHMEIIQERISREFGVEVITTAPSVIYHVYNLKGEKILVDNPSKLPSPQMIERIEEPFIKATIICPEIYIGKVMELSQNKRGSLQNIEYIDQQRTKINYLLPFSETIYNYFDKLKSLTKGYASFDYEMENYRVSKLQKMDILLNGEVVDALSLIVHKDFAYSRGKTICETLKSFIPKQMFEIPIQAALGKKIIARETIKAMRKDVTAKLYGGDVTRKKKLLEKQKKGKKKMKTLGKVDLPQKAFLAILSAK.

Positions 11 to 193 (KRIRNFSIIA…RIVTQISPPK (183 aa)) constitute a tr-type G domain. Residues 23 to 28 (DHGKST) and 140 to 143 (NKVD) each bind GTP.

Belongs to the TRAFAC class translation factor GTPase superfamily. Classic translation factor GTPase family. LepA subfamily.

The protein localises to the cell membrane. The catalysed reaction is GTP + H2O = GDP + phosphate + H(+). Its function is as follows. Required for accurate and efficient protein synthesis under certain stress conditions. May act as a fidelity factor of the translation reaction, by catalyzing a one-codon backward translocation of tRNAs on improperly translocated ribosomes. Back-translocation proceeds from a post-translocation (POST) complex to a pre-translocation (PRE) complex, thus giving elongation factor G a second chance to translocate the tRNAs correctly. Binds to ribosomes in a GTP-dependent manner. This is Elongation factor 4 from Phytoplasma australiense.